Reading from the N-terminus, the 146-residue chain is Endoribonuclease YbeY (146 aa).

Zn(2+) is bound by residues H108, H112, and H118.

Belongs to the endoribonuclease YbeY family. Zn(2+) serves as cofactor.

The protein resides in the cytoplasm. Functionally, single strand-specific metallo-endoribonuclease involved in late-stage 70S ribosome quality control and in maturation of the 3' terminus of the 16S rRNA. This Aster yellows witches'-broom phytoplasma (strain AYWB) protein is Endoribonuclease YbeY.